A 392-amino-acid chain; its full sequence is Phosphoglycerate kinase (392 aa).

Substrate contacts are provided by residues 21 to 23 (DLN), Arg-36, 59 to 62 (HLGR), Arg-114, and Arg-147. Residues Lys-198, Glu-320, and 346–349 (GGDT) contribute to the ATP site.

Belongs to the phosphoglycerate kinase family. Monomer.

It is found in the cytoplasm. The enzyme catalyses (2R)-3-phosphoglycerate + ATP = (2R)-3-phospho-glyceroyl phosphate + ADP. It functions in the pathway carbohydrate degradation; glycolysis; pyruvate from D-glyceraldehyde 3-phosphate: step 2/5. The polypeptide is Phosphoglycerate kinase (Nitrosomonas europaea (strain ATCC 19718 / CIP 103999 / KCTC 2705 / NBRC 14298)).